Consider the following 228-residue polypeptide: Isonitrile hydratase (228 aa).

Cys101 is a catalytic residue.

In terms of assembly, homodimer.

It catalyses the reaction N-cyclohexylformamide = cyclohexyl isocyanide + H2O. Its activity is regulated as follows. Sensitive to thiol reagents and oxidizing reagents, but is not influenced by chelators or reducing reagents. Its function is as follows. Catalyzes the hydration of cyclohexyl isocyanide to N-cyclohexylformamide. Acts on various isonitriles, but not on nitriles or amides. Probably involved in detoxification. This chain is Isonitrile hydratase (inhA), found in Pseudomonas putida (Arthrobacter siderocapsulatus).